The sequence spans 910 residues: MPRSAAQSEEQTLQGSLFGAPEPAEPAKGRSSQPANPELEDLTDASLSADAAARPRQRQQRGESNDPSADATAEACDGDDASSDEPAWAHHSQVDPAQLTPMLRHYVELKAEHPERVLLYRLGDFFECFFEDAVELSRVLELTLTGKEGGKAIGRVPMAGIPHHAAERYCAELIRRGYSVALCDQLETTPAKGALLKRGITRVLTPGTVLEEGMLSARRNNWLAAVVVEPATSKTPLRWGLASADVSTGDVRVMERTGSDGLHQQLAQLDASELLWAGDGDSGEAARPTWCPERLRLSPMARTPFSAPQAEQTLKTHYQLASLDGLGLPELPLALRAFGGLLQYVNDTQPLEEDARVPLDVPAIVHSGEALVLDAQTRRNLELTATQRDGQLQGSLLWAIDQTLTAMGGRCLRRWLEAPLMNLSAIQQRQAVVSLLVSGRPLRQALRRLLRPMGDLERLAGRAGAGHAGARDLVAIADGLERLPQLASRLQSSLEQWPNELTALQQPEPALAELAASIRQTLIDAPPLSLSEGGLIHDGVDPLLDGLRNQLDDQDAWLAEQERLERERSGNNNLRLQYHRTFGYFLAVSKAKASSVPEHWIRRQTLANEERFITPELKEREGRIFQLRARACQREYELYCSLREQVGAMAAPIRAAARGIACLDALSGLADTAATGGWCAPLLNDSRQLEIVAGRHPVVEQLLVETSFTPNDLNLGSGTDLIVLTGPNASGKSCYLRQIGLIQLLAQIGSWVPATSARVGLADRIFTRVGAVDDLAAGQSTFMVEMAETANILHHASARSLVLLDEIGRGTATFDGLSIAWAVSEHLAGDLKARTVFATHYHELNNLAGERANVANFQVMVEETGADLVFLHQVQCGGASRSYGIEAARLAGVPTPVVQRARQVLDQLAA.

Positions 1–15 (MPRSAAQSEEQTLQG) are enriched in polar residues. The segment at 1 to 94 (MPRSAAQSEE…EPAWAHHSQV (94 aa)) is disordered. Over residues 44–54 (DASLSADAAAR) the composition is skewed to low complexity. 726–733 (GPNASGKS) is an ATP binding site.

It belongs to the DNA mismatch repair MutS family.

Its function is as follows. This protein is involved in the repair of mismatches in DNA. It is possible that it carries out the mismatch recognition step. This protein has a weak ATPase activity. This is DNA mismatch repair protein MutS from Synechococcus sp. (strain WH7803).